A 145-amino-acid chain; its full sequence is UPF0735 ACT domain-containing protein CLH_2637 (145 aa).

The ACT domain occupies 69–144 (TFNLIVKDQT…YVEKIEFVAM (76 aa)).

It belongs to the UPF0735 family.

In Clostridium botulinum (strain Alaska E43 / Type E3), this protein is UPF0735 ACT domain-containing protein CLH_2637.